Here is a 301-residue protein sequence, read N- to C-terminus: Probable alpha-L-glutamate ligase (301 aa).

In terms of domain architecture, ATP-grasp spans 104 to 287; sequence LQLLSRRGIG…VAGMIIEHLE (184 aa). ATP contacts are provided by residues Lys141, 178-179, Asp187, and 211-213; these read EY and RSN. Residues Asp248, Glu260, and Asn262 each coordinate Mg(2+). Mn(2+)-binding residues include Asp248, Glu260, and Asn262.

Belongs to the RimK family. It depends on Mg(2+) as a cofactor. Mn(2+) is required as a cofactor.

The chain is Probable alpha-L-glutamate ligase from Pseudomonas entomophila (strain L48).